We begin with the raw amino-acid sequence, 161 residues long: MKIRIGHGFDVHKFGAARPLILCGVEVPYETGLIAHSDGDVVLHAISDAILGALALGDIGKHFPDTDTAYKGADSRVLLRHCYALARAKGFVLGNLDVTIIAQAPKMAPHIEAMRQILAADLTSELDDINVKATTTEQLGFTGRKEGIAVEAVVLMTRKHD.

Residues aspartate 10 and histidine 12 each contribute to the a divalent metal cation site. 4-CDP-2-C-methyl-D-erythritol 2-phosphate contacts are provided by residues 10–12 (DVH) and 36–37 (HS). Histidine 44 provides a ligand contact to a divalent metal cation. Residues 58–60 (DIG), 63–67 (FPDTD), 102–108 (AQAPKMA), 134–137 (TTTE), phenylalanine 141, and arginine 144 contribute to the 4-CDP-2-C-methyl-D-erythritol 2-phosphate site.

Belongs to the IspF family. Homotrimer. The cofactor is a divalent metal cation.

The enzyme catalyses 4-CDP-2-C-methyl-D-erythritol 2-phosphate = 2-C-methyl-D-erythritol 2,4-cyclic diphosphate + CMP. It functions in the pathway isoprenoid biosynthesis; isopentenyl diphosphate biosynthesis via DXP pathway; isopentenyl diphosphate from 1-deoxy-D-xylulose 5-phosphate: step 4/6. Functionally, involved in the biosynthesis of isopentenyl diphosphate (IPP) and dimethylallyl diphosphate (DMAPP), two major building blocks of isoprenoid compounds. Catalyzes the conversion of 4-diphosphocytidyl-2-C-methyl-D-erythritol 2-phosphate (CDP-ME2P) to 2-C-methyl-D-erythritol 2,4-cyclodiphosphate (ME-CPP) with a corresponding release of cytidine 5-monophosphate (CMP). The polypeptide is 2-C-methyl-D-erythritol 2,4-cyclodiphosphate synthase (Shewanella baltica (strain OS155 / ATCC BAA-1091)).